The sequence spans 152 residues: MMKKIDVKILDPRVGQQFPLPTYATSGSAGLDLRACLDDAVELAPGATTLVPTGLAIHIADPSLAAVMLPRSGLGHKHGIVLGNLVGLIDSDYQGQLMVSIWNRGQDSFTIEPGERIAQMVFVPVVQAEFNLVEAFDATERGEGGFGHSGRK.

Residues 71-73 (RSG), N84, 88-90 (LID), and M98 contribute to the substrate site.

This sequence belongs to the dUTPase family. The cofactor is Mg(2+).

The enzyme catalyses dUTP + H2O = dUMP + diphosphate + H(+). It participates in pyrimidine metabolism; dUMP biosynthesis; dUMP from dCTP (dUTP route): step 2/2. This enzyme is involved in nucleotide metabolism: it produces dUMP, the immediate precursor of thymidine nucleotides and it decreases the intracellular concentration of dUTP so that uracil cannot be incorporated into DNA. The polypeptide is Deoxyuridine 5'-triphosphate nucleotidohydrolase (Salmonella agona (strain SL483)).